The primary structure comprises 732 residues: Catalase-peroxidase (732 aa).

The disordered stretch occupies residues M1–P29. Positions W96–Y223 form a cross-link, tryptophyl-tyrosyl-methioninium (Trp-Tyr) (with M-249). The active-site Proton acceptor is the H97. The segment at residues Y223–M249 is a cross-link (tryptophyl-tyrosyl-methioninium (Tyr-Met) (with W-96)). A heme b-binding site is contributed by H264.

The protein belongs to the peroxidase family. Peroxidase/catalase subfamily. As to quaternary structure, homodimer or homotetramer. It depends on heme b as a cofactor. Post-translationally, formation of the three residue Trp-Tyr-Met cross-link is important for the catalase, but not the peroxidase activity of the enzyme.

It carries out the reaction H2O2 + AH2 = A + 2 H2O. It catalyses the reaction 2 H2O2 = O2 + 2 H2O. In terms of biological role, bifunctional enzyme with both catalase and broad-spectrum peroxidase activity. The chain is Catalase-peroxidase from Serratia proteamaculans (strain 568).